A 1167-amino-acid chain; its full sequence is Melanoma receptor tyrosine-protein kinase (1167 aa).

An N-terminal signal peptide occupies residues 1 to 25 (MEFLRGGAALLQLLLVLSISRCCST). Topologically, residues 26–642 (DPDRKVCQGT…GCRGDIVSHS (617 aa)) are extracellular. N-linked (GlcNAc...) asparagine glycans are attached at residues Asn114, Asn144, and Asn201. Disulfide bonds link Cys195/Cys204, Cys199/Cys212, Cys220/Cys228, Cys224/Cys236, Cys237/Cys245, Cys241/Cys253, Cys256/Cys265, Cys269/Cys296, Cys300/Cys311, Cys315/Cys330, and Cys333/Cys337. N-linked (GlcNAc...) asparagine glycosylation is found at Asn356, Asn365, Asn398, Asn417, and Asn501. Cystine bridges form between Cys504–Cys513, Cys508–Cys521, Cys524–Cys533, Cys537–Cys553, Cys556–Cys569, Cys560–Cys577, Cys593–Cys615, Cys618–Cys626, and Cys622–Cys634. Residue Asn576 is glycosylated (N-linked (GlcNAc...) asparagine). Asn621 carries N-linked (GlcNAc...) asparagine glycosylation. A helical transmembrane segment spans residues 643–665 (SLAVGLVSGLLITVIVALLIVVL). Residues 666–1167 (LRRRRIKRKR…QGGALYTPVR (502 aa)) are Cytoplasmic-facing. The Protein kinase domain occupies 710 to 977 (FKKDRVLGSG…QMARDPSRYL (268 aa)). ATP is bound by residues 716 to 724 (LGSGAFGTV) and Lys743. Residue Asp835 is the Proton acceptor of the active site.

Belongs to the protein kinase superfamily. Tyr protein kinase family. EGF receptor subfamily.

The protein localises to the membrane. The enzyme catalyses L-tyrosyl-[protein] + ATP = O-phospho-L-tyrosyl-[protein] + ADP + H(+). Its function is as follows. Probable receptor with tyrosine-protein kinase activity. In Xiphophorus maculatus (Southern platyfish), this protein is Melanoma receptor tyrosine-protein kinase (xmrk).